Here is a 360-residue protein sequence, read N- to C-terminus: DNA replication and repair protein RecF (360 aa).

30–37 (GQNGSGKT) serves as a coordination point for ATP.

Belongs to the RecF family.

It is found in the cytoplasm. In terms of biological role, the RecF protein is involved in DNA metabolism; it is required for DNA replication and normal SOS inducibility. RecF binds preferentially to single-stranded, linear DNA. It also seems to bind ATP. In Shewanella oneidensis (strain ATCC 700550 / JCM 31522 / CIP 106686 / LMG 19005 / NCIMB 14063 / MR-1), this protein is DNA replication and repair protein RecF.